The primary structure comprises 376 residues: N-acetyldiaminopimelate deacetylase (376 aa).

Asp69 is a catalytic residue. Catalysis depends on Glu128, which acts as the Proton acceptor.

This sequence belongs to the peptidase M20A family. N-acetyldiaminopimelate deacetylase subfamily.

The enzyme catalyses N-acetyl-(2S,6S)-2,6-diaminopimelate + H2O = (2S,6S)-2,6-diaminopimelate + acetate. It participates in amino-acid biosynthesis; L-lysine biosynthesis via DAP pathway; LL-2,6-diaminopimelate from (S)-tetrahydrodipicolinate (acetylase route): step 3/3. In terms of biological role, catalyzes the conversion of N-acetyl-diaminopimelate to diaminopimelate and acetate. The polypeptide is N-acetyldiaminopimelate deacetylase (Bacillus cereus (strain B4264)).